A 303-amino-acid chain; its full sequence is Recombination-associated protein RdgC (303 aa).

It belongs to the RdgC family.

It is found in the cytoplasm. It localises to the nucleoid. Functionally, may be involved in recombination. The polypeptide is Recombination-associated protein RdgC (Salmonella agona (strain SL483)).